The chain runs to 430 residues: Aspartate--tRNA(Asp/Asn) ligase (430 aa).

Glu166 provides a ligand contact to L-aspartate. Residues 188–191 are aspartate; that stretch reads QLYK. Arg210 contacts L-aspartate. Residues 210-212, 218-220, and Glu353 contribute to the ATP site; these read RAE and KHL. Residues Glu353 and Ser356 each coordinate Mg(2+). L-aspartate is bound by residues Ser356 and Arg360. Residue 401 to 404 participates in ATP binding; sequence GAER.

It belongs to the class-II aminoacyl-tRNA synthetase family. Type 2 subfamily. In terms of assembly, homodimer. Mg(2+) is required as a cofactor.

It localises to the cytoplasm. The enzyme catalyses tRNA(Asx) + L-aspartate + ATP = L-aspartyl-tRNA(Asx) + AMP + diphosphate. Functionally, aspartyl-tRNA synthetase with relaxed tRNA specificity since it is able to aspartylate not only its cognate tRNA(Asp) but also tRNA(Asn). Reaction proceeds in two steps: L-aspartate is first activated by ATP to form Asp-AMP and then transferred to the acceptor end of tRNA(Asp/Asn). This is Aspartate--tRNA(Asp/Asn) ligase from Methanospirillum hungatei JF-1 (strain ATCC 27890 / DSM 864 / NBRC 100397 / JF-1).